The primary structure comprises 95 residues: Signal recognition particle 19 kDa protein (95 aa).

It belongs to the SRP19 family. As to quaternary structure, part of the signal recognition particle protein translocation system, which is composed of SRP and FtsY. Archaeal SRP consists of a 7S RNA molecule of 300 nucleotides and two protein subunits: SRP54 and SRP19.

Its subcellular location is the cytoplasm. In terms of biological role, involved in targeting and insertion of nascent membrane proteins into the cytoplasmic membrane. Binds directly to 7S RNA and mediates binding of the 54 kDa subunit of the SRP. This is Signal recognition particle 19 kDa protein from Desulfurococcus amylolyticus (strain DSM 18924 / JCM 16383 / VKM B-2413 / 1221n) (Desulfurococcus kamchatkensis).